Here is a 65-residue protein sequence, read N- to C-terminus: Putative per-hexamer repeat protein 2 (65 aa).

The chain is Putative per-hexamer repeat protein 2 (Phxr2) from Mus musculus (Mouse).